Consider the following 168-residue polypeptide: Crossover junction endodeoxyribonuclease RuvC (168 aa).

Residues aspartate 7, glutamate 64, and aspartate 136 contribute to the active site. Mg(2+) contacts are provided by aspartate 7, glutamate 64, and aspartate 136.

The protein belongs to the RuvC family. In terms of assembly, homodimer which binds Holliday junction (HJ) DNA. The HJ becomes 2-fold symmetrical on binding to RuvC with unstacked arms; it has a different conformation from HJ DNA in complex with RuvA. In the full resolvosome a probable DNA-RuvA(4)-RuvB(12)-RuvC(2) complex forms which resolves the HJ. The cofactor is Mg(2+).

The protein localises to the cytoplasm. It carries out the reaction Endonucleolytic cleavage at a junction such as a reciprocal single-stranded crossover between two homologous DNA duplexes (Holliday junction).. Functionally, the RuvA-RuvB-RuvC complex processes Holliday junction (HJ) DNA during genetic recombination and DNA repair. Endonuclease that resolves HJ intermediates. Cleaves cruciform DNA by making single-stranded nicks across the HJ at symmetrical positions within the homologous arms, yielding a 5'-phosphate and a 3'-hydroxyl group; requires a central core of homology in the junction. The consensus cleavage sequence is 5'-(A/T)TT(C/G)-3'. Cleavage occurs on the 3'-side of the TT dinucleotide at the point of strand exchange. HJ branch migration catalyzed by RuvA-RuvB allows RuvC to scan DNA until it finds its consensus sequence, where it cleaves and resolves the cruciform DNA. The sequence is that of Crossover junction endodeoxyribonuclease RuvC from Polynucleobacter necessarius subsp. necessarius (strain STIR1).